The primary structure comprises 296 residues: HTH-type transcriptional regulator IlvR (296 aa).

In terms of domain architecture, HTH lysR-type spans 1–58; that stretch reads MDIRQFRHFAAVAETLHFGRAAERLGITQPPLSQSIQALEKALGAPLFARTKRHVELT. Residues 18–37 constitute a DNA-binding region (H-T-H motif); it reads FGRAAERLGITQPPLSQSIQ.

Belongs to the LysR transcriptional regulatory family.

Its function is as follows. Positively regulates the expression of the ilvD gene while negatively autoregulating its own expression. This Caulobacter vibrioides (strain ATCC 19089 / CIP 103742 / CB 15) (Caulobacter crescentus) protein is HTH-type transcriptional regulator IlvR (ilvR).